The chain runs to 574 residues: Ankyrin repeat protein B18 (574 aa).

ANK repeat units lie at residues 56–87, 135–164, 167–213, 217–249, 253–285, and 327–356; these read TGYT…DVTM, IKSR…DPNF, DGYT…NLNA, CGNT…NFKI, HGLT…NVGE, and EGKT…DINA. The F-box domain maps to 541 to 574; it reads NCLLTLLPSEIIYEILYMLTINDLYNISYPPTKV.

This chain is Ankyrin repeat protein B18, found in Vaccinia virus (strain Ankara) (VACV).